We begin with the raw amino-acid sequence, 818 residues long: Cation/H(+) antiporter 6A (818 aa).

Transmembrane regions (helical) follow at residues 51-71 (NFWEYPLPNLEILIFSTFFIW), 88-110 (FTYMMIAGIILGQTCHFSNKSWI), 123-143 (VAETLGAFGFVLYWFLKGVTM), 156-176 (SVIGFITVIIPLICGSLTFRY), 192-212 (LIIFLQSISAFTSIDTLLKDL), 222-242 (IALSGAMVTDMLAFGVTFFNA), 248-268 (LYGFMQTVGFCLFVVVMICVV), 288-308 (FYLYSIFGIAFACFTFFNKVI), 310-330 (LFGPAGSFVFGLTVPNGYPLG), 340-360 (FNLGSILPLFGSLTMMQVDLL), 376-396 (IYEVISFILLVNTTKFVVTTI), 409-429 (FALALVLSNKGIFELAYYTYA), and 438-458 (EVFTILAAYTLLNSIFIPMLL).

The protein belongs to the monovalent cation:proton antiporter 2 (CPA2) transporter (TC 2.A.37) family. CHX (TC 2.A.37.4) subfamily. Preferentially expressed in pollen.

It localises to the membrane. May operate as a cation/H(+) antiporter. The polypeptide is Cation/H(+) antiporter 6A (CHX6a) (Arabidopsis thaliana (Mouse-ear cress)).